A 202-amino-acid polypeptide reads, in one-letter code: Small ribosomal subunit protein uS5 (202 aa).

Positions 46 to 109 (LKSEVLSVGF…RRAKLNIVPV (64 aa)) constitute an S5 DRBM domain.

The protein belongs to the universal ribosomal protein uS5 family. As to quaternary structure, part of the 30S ribosomal subunit. Contacts protein S4.

With S4 and S12 plays an important role in translational accuracy. This Thermofilum pendens (strain DSM 2475 / Hrk 5) protein is Small ribosomal subunit protein uS5.